A 255-amino-acid polypeptide reads, in one-letter code: (R)-S-adenosyl-L-methionine hydrolase (255 aa).

Adenosine contacts are provided by Asp9, Asp70, and Asn186. Residues Asn186, Ser227, Glu232, and Val235 each contribute to the (R)-S-adenosyl-L-methionine site. Val235 provides a ligand contact to adenosine.

It belongs to the SAM hydrolase / SAM-dependent halogenase family. In terms of assembly, homotrimer.

It catalyses the reaction (R)-S-adenosyl-L-methionine + H2O = adenosine + L-methionine + H(+). Its function is as follows. Catalyzes the hydrolysis of S-adenosyl-L-methionine (SAM) into adenosine and L-methionine. Does not have chlorinase or fluorinase activity. This chain is (R)-S-adenosyl-L-methionine hydrolase, found in Thermus thermophilus (strain ATCC 27634 / DSM 579 / HB8).